The primary structure comprises 107 residues: Late embryogenesis abundant protein M10 (107 aa).

The signal sequence occupies residues 1–19 (MGNLMSLVLVALLFSLSLA).

Functionally, may be involved in the acquisition of desiccation tolerance during late phase of embryogenesis. The chain is Late embryogenesis abundant protein M10 from Arabidopsis thaliana (Mouse-ear cress).